A 309-amino-acid polypeptide reads, in one-letter code: MKHGILVAYKPKGPTSHDVVDEVRKKLKTRKVGHGGTLDPFACGVLIIGVNQGTRILEFYKDLKKVYWVKMRLGLITETFDITGEVVEERECNVTEEEIREAIFSFVGEYDQVPPAYSAKKYKGERLYKLAREGKIINLPPKRVKIFKIWDVNIEGRDVSFRVEVSPGTYIRSLCMDIGYKLGCGATAVELVRESVGPHTIEESLNVFEAAPEEIENRIIPLEKCLEWLPRVVVHQESTKMILNGSQIHLEMLKEWDGFKKGEVVRVFNEEGRLLALAEAERNSSFLETLRKHERNERVLTLRKVFNTR.

Residue Asp39 is the Nucleophile of the active site. The 78-residue stretch at 229–306 (LPRVVVHQES…ERVLTLRKVF (78 aa)) folds into the PUA domain.

It belongs to the pseudouridine synthase TruB family. Type 1 subfamily.

It catalyses the reaction uridine(55) in tRNA = pseudouridine(55) in tRNA. Responsible for synthesis of pseudouridine from uracil-55 in the psi GC loop of transfer RNAs. This Thermotoga maritima (strain ATCC 43589 / DSM 3109 / JCM 10099 / NBRC 100826 / MSB8) protein is tRNA pseudouridine synthase B.